The following is a 287-amino-acid chain: ATP synthase gamma chain (287 aa).

It belongs to the ATPase gamma chain family. As to quaternary structure, F-type ATPases have 2 components, CF(1) - the catalytic core - and CF(0) - the membrane proton channel. CF(1) has five subunits: alpha(3), beta(3), gamma(1), delta(1), epsilon(1). CF(0) has three main subunits: a, b and c.

It is found in the cell inner membrane. Functionally, produces ATP from ADP in the presence of a proton gradient across the membrane. The gamma chain is believed to be important in regulating ATPase activity and the flow of protons through the CF(0) complex. The sequence is that of ATP synthase gamma chain from Escherichia fergusonii (strain ATCC 35469 / DSM 13698 / CCUG 18766 / IAM 14443 / JCM 21226 / LMG 7866 / NBRC 102419 / NCTC 12128 / CDC 0568-73).